We begin with the raw amino-acid sequence, 215 residues long: Octanoyltransferase (215 aa).

Residues 31–206 (PDSQDEIWLV…QLVKHLDYAE (176 aa)) enclose the BPL/LPL catalytic domain. Substrate-binding positions include 70-77 (RGGQVTYH), 137-139 (SLG), and 150-152 (GLA). Cys-168 functions as the Acyl-thioester intermediate in the catalytic mechanism.

This sequence belongs to the LipB family.

Its subcellular location is the cytoplasm. The catalysed reaction is octanoyl-[ACP] + L-lysyl-[protein] = N(6)-octanoyl-L-lysyl-[protein] + holo-[ACP] + H(+). The protein operates within protein modification; protein lipoylation via endogenous pathway; protein N(6)-(lipoyl)lysine from octanoyl-[acyl-carrier-protein]: step 1/2. Catalyzes the transfer of endogenously produced octanoic acid from octanoyl-acyl-carrier-protein onto the lipoyl domains of lipoate-dependent enzymes. Lipoyl-ACP can also act as a substrate although octanoyl-ACP is likely to be the physiological substrate. This chain is Octanoyltransferase, found in Pseudomonas putida (strain W619).